The sequence spans 540 residues: Anti-sigma-I factor RsgI7 (540 aa).

The 48-residue stretch at 1–48 (MRAMVVDMNDKYAVVVNKEGQYIKIKRKAEHRLGYQVELPDRVIGFER) folds into the RsgI N-terminal anti-sigma domain. Over 1–50 (MRAMVVDMNDKYAVVVNKEGQYIKIKRKAEHRLGYQVELPDRVIGFERRT) the chain is Cytoplasmic. Residues 51–73 (LLKVVSVAAALLIVSSISFAVYS) form a helical membrane-spanning segment. Over 74 to 540 (YNLPYSYVNV…PGKEILKKRC (467 aa)) the chain is Extracellular. 5 stretches are compositionally biased toward basic and acidic residues: residues 238–256 (DIKK…KKVN), 319–329 (SGIDKGNKDSK), 338–351 (NDVK…KTNS), 359–370 (VSKDNKNDKADG), and 398–419 (SKDD…EDNK). Disordered stretches follow at residues 238–429 (DIKK…CPQY) and 481–540 (QEEQ…KKRC). The stretch at 451–501 (KEDMTKQNDEWFKKMQEEQKKQYDEWLKKMQEEQKKQHDEWVKKMEEMKNT) forms a coiled coil.

In terms of assembly, interacts (via RsgI N-terminal anti-sigma domain) with SigI7.

The protein localises to the cell membrane. In terms of biological role, anti-sigma factor for SigI7. Negatively regulates SigI7 activity through direct interaction. This chain is Anti-sigma-I factor RsgI7, found in Acetivibrio thermocellus (strain ATCC 27405 / DSM 1237 / JCM 9322 / NBRC 103400 / NCIMB 10682 / NRRL B-4536 / VPI 7372) (Clostridium thermocellum).